Consider the following 284-residue polypeptide: 3-methyl-2-oxobutanoate hydroxymethyltransferase 2 (284 aa).

Mg(2+) is bound by residues Asp49 and Asp88. Residues 49-50 (DS), Asp88, and Lys118 contribute to the 3-methyl-2-oxobutanoate site. Glu120 is a Mg(2+) binding site. The active-site Proton acceptor is Glu187.

The protein belongs to the PanB family. Homodecamer; pentamer of dimers. Requires Mg(2+) as cofactor.

The protein localises to the cytoplasm. It carries out the reaction 3-methyl-2-oxobutanoate + (6R)-5,10-methylene-5,6,7,8-tetrahydrofolate + H2O = 2-dehydropantoate + (6S)-5,6,7,8-tetrahydrofolate. Its pathway is cofactor biosynthesis; (R)-pantothenate biosynthesis; (R)-pantoate from 3-methyl-2-oxobutanoate: step 1/2. Functionally, catalyzes the reversible reaction in which hydroxymethyl group from 5,10-methylenetetrahydrofolate is transferred onto alpha-ketoisovalerate to form ketopantoate. In Burkholderia ambifaria (strain ATCC BAA-244 / DSM 16087 / CCUG 44356 / LMG 19182 / AMMD) (Burkholderia cepacia (strain AMMD)), this protein is 3-methyl-2-oxobutanoate hydroxymethyltransferase 2.